Reading from the N-terminus, the 123-residue chain is Class II hydrophobin 2 (123 aa).

An N-terminal signal peptide occupies residues 1 to 16; sequence MRSFLVIATLAVGAFG. Cystine bridges form between Cys22–Cys70, Cys32–Cys61, Cys33–Cys45, and Cys71–Cys82.

This sequence belongs to the cerato-ulmin hydrophobin family. As to quaternary structure, homodimer. Homodimers further self-assemble to form highly ordered films at water-air interfaces through intermolecular interactions.

The protein resides in the secreted. The protein localises to the cell wall. Functionally, aerial growth, conidiation, and dispersal of filamentous fungi in the environment rely upon a capability of their secreting small amphipathic proteins called hydrophobins (HPBs) with low sequence identity. Class I can self-assemble into an outermost layer of rodlet bundles on aerial cell surfaces, conferring cellular hydrophobicity that supports fungal growth, development and dispersal; whereas Class II form highly ordered films at water-air interfaces through intermolecular interactions but contribute nothing to the rodlet structure. Hyd2 is a class II hydrophobin that plays probably a role in intraspecific signaling or hyphal fusion. Not necessary for root adhesion and colonization. Might play an essential role since no deletion mutants could be obtained. This chain is Class II hydrophobin 2, found in Bionectria ochroleuca (Gliocladium roseum).